The primary structure comprises 163 residues: Steroid receptor-associated and regulated protein (163 aa).

Residues 1 to 16 are compositionally biased toward basic and acidic residues; that stretch reads MAFSKDPRRTSLRDSS. 2 disordered regions span residues 1 to 30 and 96 to 149; these read MAFS…CAPK and ALDG…EKVK. Positions 17 to 26 are enriched in polar residues; it reads VEMSSGTQPS.

As to quaternary structure, interacts with 14-3-3 proteins.

May regulate the transcriptional function of androgen and estrogen receptors. The chain is Steroid receptor-associated and regulated protein from Mus musculus (Mouse).